A 1962-amino-acid chain; its full sequence is Myosin heavy chain, muscle (1962 aa).

The region spanning 33 to 82 (DSKKSCWIPDEKEGYLLGEIKATKGDIVSVGLQGGEVRDIKSEKVEKVNP) is the Myosin N-terminal SH3-like domain. The 692-residue stretch at 86-777 (EKIEDMADMT…VLGQMEEFRD (692 aa)) folds into the Myosin motor domain. 179–186 (GESGAGKT) contacts ATP. Residues 656-678 (LNSLMTTLRSTQPHFVRCIIPNE) form an actin-binding region. The IQ domain occupies 780 to 809 (LGKIMSWMQAWARGYLSRKGFKKLQEQRVA). The stretch at 802 to 1927 (KLQEQRVALK…KFRAKGRAGS (1126 aa)) forms a coiled coil. Disordered regions lie at residues 1822 to 1862 (ENEL…NHER) and 1922 to 1962 (KGRA…ENEF).

Belongs to the TRAFAC class myosin-kinesin ATPase superfamily. Myosin family. Muscle myosin is a hexameric protein that consists of 2 heavy chain subunits (MHC), 2 alkali light chain subunits (MLC) and 2 regulatory light chain subunits (MLC-2). In terms of tissue distribution, expressed in larval and adult muscles. Isoforms containing exon 9a are expressed in indirect flight muscles, exons 9a and 9b are expressed in jump muscles, exons 9b and 9c are expressed in other larval and adult muscles.

It localises to the cytoplasm. The protein localises to the myofibril. Muscle contraction. The chain is Myosin heavy chain, muscle (Mhc) from Drosophila melanogaster (Fruit fly).